The following is an 83-amino-acid chain: Small ribosomal subunit protein bS16 (83 aa).

It belongs to the bacterial ribosomal protein bS16 family.

The chain is Small ribosomal subunit protein bS16 from Pseudomonas fluorescens (strain ATCC BAA-477 / NRRL B-23932 / Pf-5).